A 142-amino-acid polypeptide reads, in one-letter code: Baculoviral IAP repeat-containing protein 5 (142 aa).

A BIR repeat occupies 18 to 88; the sequence is RVSTFKNWPF…KHSSGCAFLS (71 aa). Position 20 is a phosphoserine; by AURKC (serine 20). Lysine 23 bears the N6-acetyllysine mark. Position 34 is a phosphothreonine; by CDK1 and CDK15 (threonine 34). Threonine 48 is subject to Phosphothreonine; by CK2; in vitro. 4 residues coordinate Zn(2+): cysteine 57, cysteine 60, histidine 77, and cysteine 84. 4 positions are modified to N6-acetyllysine: lysine 90, lysine 110, lysine 112, and lysine 115. At threonine 117 the chain carries Phosphothreonine; by AURKB.

It belongs to the IAP family. In terms of assembly, monomer or homodimer. Exists as a homodimer in the apo state and as a monomer in the CPC-bound state. The monomer protects cells against apoptosis more efficiently than the dimer. Only the dimeric form is capable of enhancing tubulin stability in cells. When phosphorylated, interacts with LAMTOR5/HBXIP; the resulting complex binds pro-CASP9, as well as active CASP9, but much less efficiently. Component of the chromosomal passenger complex (CPC) composed of at least BIRC5/survivin, CDCA8/borealin, INCENP, AURKB or AURKC; in the complex forms a triple-helix bundle-based subcomplex with INCENP and CDCA8. Interacts with JTB. Interacts (via BIR domain) with histone H3 phosphorylated at 'Thr-3' (H3pT3). Interacts with EVI5. Interacts with GTP-bound RAN in both the S and M phases of the cell cycle. Interacts with USP9X. Interacts with tubulin. Interacts with BIRC2/c-IAP1. The monomeric form interacts with XIAP/BIRC4. Both the dimeric and monomeric form can interact with DIABLO/SMAC. Interacts with BIRC6/bruce. Interacts with FBXL7; this interaction facilitates the polyubiquitination and subsequent proteasomal degradation of BIRC5 by the SCF(FBXL7) E3 ubiquitin-protein ligase complex. In terms of processing, ubiquitinated by the Cul9-RING ubiquitin-protein ligase complex, leading to its degradation. Ubiquitination is required for centrosomal targeting. Deubiquitinated by USP35 or USP38; leading to stabilization. In vitro phosphorylation at Thr-117 by AURKB prevents interaction with INCENP and localization to mitotic chromosomes. Phosphorylation at Thr-48 by CK2 is critical for its mitotic and anti-apoptotic activities. Phosphorylation at Thr-34 by CDK15 is critical for its anti-apoptotic activity. Phosphorylation at Ser-20 by AURKC is critical for regulation of proper chromosome alignment and segregation, and possibly cytokinesis. In terms of tissue distribution, expressed in spleen, lung, brain, heart, kidney and intestine (at protein level). Expressed in cochlea including the organ of Corti, the lateral wall, the interdental cells of the Limbus as well as in cells of the cochlear nerve and the spiral ganglions (at protein level). Also expressed in Schwann cells (at protein level). Not expressed in cells of the inner and outer sulcus or the Reissner's membrane (at protein level).

It is found in the cytoplasm. Its subcellular location is the nucleus. It localises to the chromosome. The protein resides in the centromere. The protein localises to the cytoskeleton. It is found in the spindle. Its subcellular location is the kinetochore. It localises to the midbody. Functionally, multitasking protein that has dual roles in promoting cell proliferation and preventing apoptosis. Component of a chromosome passage protein complex (CPC) which is essential for chromosome alignment and segregation during mitosis and cytokinesis. Acts as an important regulator of the localization of this complex; directs CPC movement to different locations from the inner centromere during prometaphase to midbody during cytokinesis and participates in the organization of the center spindle by associating with polymerized microtubules. Involved in the recruitment of CPC to centromeres during early mitosis via association with histone H3 phosphorylated at 'Thr-3' (H3pT3) during mitosis. The complex with RAN plays a role in mitotic spindle formation by serving as a physical scaffold to help deliver the RAN effector molecule TPX2 to microtubules. May counteract a default induction of apoptosis in G2/M phase. The acetylated form represses STAT3 transactivation of target gene promoters. May play a role in neoplasia. Inhibitor of CASP3 and CASP7. Essential for the maintenance of mitochondrial integrity and function. The sequence is that of Baculoviral IAP repeat-containing protein 5 from Cavia porcellus (Guinea pig).